The sequence spans 624 residues: uncharacterized protein (624 aa).

The signal sequence occupies residues Met1–Ser29. Residues Asn68, Asn150, Asn219, Asn366, Asn441, Asn447, Asn464, and Asn528 are each glycosylated (N-linked (GlcNAc...) asparagine). The interval Leu141 to Gln174 is disordered.

Its subcellular location is the secreted. This is an uncharacterized protein from Saccharomyces cerevisiae (strain ATCC 204508 / S288c) (Baker's yeast).